The primary structure comprises 203 residues: NAD(P)H dehydrogenase (quinone) (203 aa).

The region spanning 3–194 (IMVVYYSAYG…AGANFQGRHV (192 aa)) is the Flavodoxin-like domain. FMN-binding positions include 9–14 (SAYGHV) and 82–84 (ARF). Position 11 (Tyr11) interacts with NAD(+). Residue Trp102 coordinates substrate. Residues 117–123 (STGTQHG) and His138 each bind FMN.

The protein belongs to the WrbA family. FMN serves as cofactor.

It carries out the reaction a quinone + NADH + H(+) = a quinol + NAD(+). The enzyme catalyses a quinone + NADPH + H(+) = a quinol + NADP(+). This is NAD(P)H dehydrogenase (quinone) from Syntrophus aciditrophicus (strain SB).